The chain runs to 607 residues: CRISPR-associated DNA-binding protein Cas12m (607 aa).

The segment at 1 to 16 (MTRVTVQTAGVHYKWQ) is wedge domain (WED-N). The recognition domain (REC) stretch occupies residues 17-189 (MPDQLTQQLR…QLRHHRWDGT (173 aa)). The segment at 50–124 (WSSYPAVAAL…IASVRDEATE (75 aa)) is roof in REC. Residues 74–83 (ASTVKEEKSR) show a composition bias toward basic and acidic residues. Residues 74–94 (ASTVKEEKSRQRTKRPSHPAV) are disordered. Residues 190-315 (GTISVQLQRQ…KIPDQGEVDE (126 aa)) form a wedge domain (WED-C) region. A ruvC-I region spans residues 316–559 (GPTIAVHLGW…TVSHTGLSRV (244 aa)). The segment at 391–452 (SIRDTLVAWL…EGADIAETLE (62 aa)) is ruvC insertion. Positions 552 to 588 (SHTGLSRVHAACGHENPADDRYLMQPVLCDGCGRTYD) are target nucleic-acid binding (TNB). Positions 560, 563, 580, and 583 each coordinate Zn(2+). Residues 589-607 (TDLSATILMLQRASAATSN) form a ruvC-II region. Residue D590 participates in Mg(2+) binding.

Belongs to the CRISPR-associated DNA-binding protein Cas12m family. As to quaternary structure, binds crRNA and target dsDNA as a monomer. The cofactor is Mg(2+). It depends on Zn(2+) as a cofactor.

Its function is as follows. CRISPR (clustered regularly interspaced short palindromic repeat), is an adaptive immune system that provides protection against mobile genetic elements (viruses, transposable elements and conjugative plasmids). CRISPR clusters contain sequences complementary to antecedent mobile elements and target invading nucleic acids. CRISPR clusters are transcribed and processed into CRISPR RNA (crRNA). Recognizes a short motif in the CRISPR repeat sequences (the 5' PAM or protospacer adjacent motif, 5'-TTN-3' in this organism) to help distinguish self versus nonself, as targets within the bacterial CRISPR locus do not have PAMs. Upon expression in E.coli as a CRISPR locus inhibits plasmid propagation when targeted to regions essential for plasmid propagation (replication origin and a selectable marker); inhibits expression of a non-selectable marker, probably at the transcriptional level. Protects E.coli against bacteriophage M13mp18, to a lesser extent against lambda and VpaE1 as well as phage T4 with hydroxymethyl or unmodified (but not glycosylated) cytosines. Preferentially binds to its associated crRNA. Cas12m-crRNA binds DNA in a PAM-dependent, crRNA-guided fashion. Binds a 20-bp crRNA-ss-target DNA heteroduplex, in a 52 nucleotide crRNA. No dsDNA, ssDNA or RNA nuclease activity is seen for the crRNA-Cas12m complex. Probably required for pre-crRNA processing to mature crRNA. This Gordonia otitidis (strain DSM 44809 / CCUG 52243 / JCM 12355 / NBRC 100426 / IFM 10032) protein is CRISPR-associated DNA-binding protein Cas12m.